A 110-amino-acid chain; its full sequence is uncharacterized protein (110 aa).

This is an uncharacterized protein from Mycobacterium tuberculosis (strain CDC 1551 / Oshkosh).